The chain runs to 150 residues: Submaxillary gland androgen-regulated protein 2, isoform alpha (150 aa).

The signal sequence occupies residues 1–22 (MKALYMVFVLWVLIGCFLSGEC).

It is found in the secreted. Its function is as follows. May play a role in protection or detoxification. The polypeptide is Submaxillary gland androgen-regulated protein 2, isoform alpha (Smr2) (Mus musculus (Mouse)).